A 341-amino-acid chain; its full sequence is Methionine import ATP-binding protein MetN 1 (341 aa).

Residues 2–241 (IEFRQVSKTF…PKTTIAQNFV (240 aa)) form the ABC transporter domain. 38–45 (GYSGAGKS) is a binding site for ATP.

Belongs to the ABC transporter superfamily. Methionine importer (TC 3.A.1.24) family. As to quaternary structure, the complex is composed of two ATP-binding proteins (MetN), two transmembrane proteins (MetI) and a solute-binding protein (MetQ).

The protein resides in the cell membrane. The enzyme catalyses L-methionine(out) + ATP + H2O = L-methionine(in) + ADP + phosphate + H(+). The catalysed reaction is D-methionine(out) + ATP + H2O = D-methionine(in) + ADP + phosphate + H(+). Its function is as follows. Part of the ABC transporter complex MetNIQ involved in methionine import. Responsible for energy coupling to the transport system. In Staphylococcus aureus (strain MW2), this protein is Methionine import ATP-binding protein MetN 1.